The chain runs to 347 residues: Microneme protein 21 (347 aa).

Its subcellular location is the cytoplasmic vesicle. It localises to the secretory vesicle. The protein resides in the microneme. The protein localises to the secreted. The protein is Microneme protein 21 of Toxoplasma gondii.